Here is a 387-residue protein sequence, read N- to C-terminus: ATP phosphoribosyltransferase regulatory subunit (387 aa).

The protein belongs to the class-II aminoacyl-tRNA synthetase family. HisZ subfamily. In terms of assembly, heteromultimer composed of HisG and HisZ subunits.

Its subcellular location is the cytoplasm. It functions in the pathway amino-acid biosynthesis; L-histidine biosynthesis; L-histidine from 5-phospho-alpha-D-ribose 1-diphosphate: step 1/9. Functionally, required for the first step of histidine biosynthesis. May allow the feedback regulation of ATP phosphoribosyltransferase activity by histidine. This Psychrobacter arcticus (strain DSM 17307 / VKM B-2377 / 273-4) protein is ATP phosphoribosyltransferase regulatory subunit.